The primary structure comprises 1192 residues: Homeodomain-interacting protein kinase 3 (1192 aa).

Lysine 27 participates in a covalent cross-link: Glycyl lysine isopeptide (Lys-Gly) (interchain with G-Cter in SUMO); alternate. Lysine 27 participates in a covalent cross-link: Glycyl lysine isopeptide (Lys-Gly) (interchain with G-Cter in SUMO2); alternate. A Protein kinase domain is found at 197–525 (YEVLDFLGRG…PIETLNHPFV (329 aa)). Residues 203–211 (LGRGTFGQV) and lysine 226 each bind ATP. Aspartate 322 acts as the Proton acceptor in catalysis. Tyrosine 359 bears the Phosphotyrosine mark. The interaction with AR stretch occupies residues 767 to 921 (QNRSNSLQNT…NSMSDDEQES (155 aa)). The interaction with FAS stretch occupies residues 775–868 (NTNIPHSAFI…SPRPSLRECK (94 aa)). Residues 799–829 (CVDTQDNHTSEGEAGTCREASVRQDSSVSDK) are disordered. The segment at 832–988 (QTIIIADSPS…ESGLSVDEHM (157 aa)) is required for localization to nuclear speckles. Residues 843–895 (AVSVITISSDSDDEETSPRPSLRECKGSLDCEACQSTLNIDRMCSLSSPDSTL) form an SUMO interaction motifs (SIM); required for nuclear localization and kinase activity region. The tract at residues 847 to 857 (ITISSDSDDEE) is interaction with UBL1. The segment covering 889-906 (SSPDSTLSTSSSGQSSPS) has biased composition (low complexity). Disordered regions lie at residues 889–943 (SSPD…PFAE) and 956–1023 (LGTC…KPAA). A Glycyl lysine isopeptide (Lys-Gly) (interchain with G-Cter in SUMO) cross-link involves residue lysine 1185.

Belongs to the protein kinase superfamily. CMGC Ser/Thr protein kinase family. HIPK subfamily. In terms of assembly, interacts with UBL1/SUMO-1. Interacts with and stabilizes ligand-bound androgen receptor (AR). Interacts with Nkx1-2. Interacts with FAS and DAXX. Probably part of a complex consisting of HIPK3, FAS and FADD. Binds to NR5A1/SF1, SPEN/MINT and RUNX2. Autophosphorylated, but autophosphorylation is not required for catalytic activity. Post-translationally, may be sumoylated. Heart, skeletal muscle, spleen, testis and lung.

It is found in the cytoplasm. Its subcellular location is the nucleus. The catalysed reaction is L-seryl-[protein] + ATP = O-phospho-L-seryl-[protein] + ADP + H(+). The enzyme catalyses L-threonyl-[protein] + ATP = O-phospho-L-threonyl-[protein] + ADP + H(+). Its function is as follows. Serine/threonine-protein kinase involved in transcription regulation, apoptosis and steroidogenic gene expression. Phosphorylates JUN and RUNX2. Seems to negatively regulate apoptosis by promoting FADD phosphorylation. Enhances androgen receptor-mediated transcription. May act as a transcriptional corepressor for NK homeodomain transcription factors. The phosphorylation of NR5A1 activates SF1 leading to increased steroidogenic gene expression upon cAMP signaling pathway stimulation. In osteoblasts, supports transcription activation: phosphorylates RUNX2 that synergizes with SPEN/MINT to enhance FGFR2-mediated activation of the osteocalcin FGF-responsive element (OCFRE). The protein is Homeodomain-interacting protein kinase 3 (Hipk3) of Mus musculus (Mouse).